We begin with the raw amino-acid sequence, 521 residues long: UPF0053 protein BU323 (521 aa).

The next 7 helical transmembrane spans lie at 13-33 (LLTLVILEVVLGIDNLIFVAI), 49-69 (IGLGLALVMRLALLSLISWIV), 80-100 (FFSLSIRDIILLFGGFFLLFK), 125-145 (FWAVVIQIVVLDAVFSLDAII), 150-170 (MVNQLLIMMIAVILATFLMLL), 185-205 (VVVLCLSFLLMIGFSLVTEAL), and 207-227 (FCIPKGYLYAAIGFSILIEIF). CBS domains lie at 311–370 (MTPR…KIDA) and 374–434 (SSKI…DADE).

It belongs to the UPF0053 family.

It is found in the cell membrane. This Buchnera aphidicola subsp. Acyrthosiphon pisum (strain APS) (Acyrthosiphon pisum symbiotic bacterium) protein is UPF0053 protein BU323.